A 338-amino-acid polypeptide reads, in one-letter code: Putative pectinesterase 63 (338 aa).

The N-terminal stretch at 1–24 is a signal peptide; it reads MGYNYVSLIVTILLVVITSPVVFG. 2 residues coordinate substrate: T116 and Q151. D174 serves as the catalytic Proton donor. D195 serves as the catalytic Nucleophile. Residue R252 coordinates substrate.

It belongs to the pectinesterase family.

The protein localises to the secreted. The protein resides in the cell wall. It carries out the reaction [(1-&gt;4)-alpha-D-galacturonosyl methyl ester](n) + n H2O = [(1-&gt;4)-alpha-D-galacturonosyl](n) + n methanol + n H(+). The protein operates within glycan metabolism; pectin degradation; 2-dehydro-3-deoxy-D-gluconate from pectin: step 1/5. Acts in the modification of cell walls via demethylesterification of cell wall pectin. The sequence is that of Putative pectinesterase 63 (PME63) from Arabidopsis thaliana (Mouse-ear cress).